A 317-amino-acid polypeptide reads, in one-letter code: GPI-specific phospholipase A2-like PGAP3 (317 aa).

The signal sequence occupies residues 1 to 18; sequence MAPFLVLFLAGVVSASRG. Topologically, residues 19–93 are lumenal; the sequence is DREPVYRDCV…QFHGKWPFSR (75 aa). An N-linked (GlcNAc...) asparagine glycan is attached at Asn-35. A helical membrane pass occupies residues 94–114; sequence FLFFQEPASALASFLNGVASL. The Cytoplasmic portion of the chain corresponds to 115 to 132; that stretch reads LMLFRYRSSVPSSCQMYR. A helical membrane pass occupies residues 133-153; it reads TCLAFSMVSVNAWFWSTIFHT. Topologically, residues 154 to 163 are lumenal; that stretch reads RDTALTEKMD. A helical membrane pass occupies residues 164-180; sequence YFCASSVILHSIYLCCM. At 181 to 189 the chain is on the cytoplasmic side; sequence RTFGLQYPS. Residues 190-210 form a helical membrane-spanning segment; sequence IANAFGAFLVLLFACHISYLT. At 211-219 the chain is on the lumenal side; it reads LGRFDYSYN. Residues 220–240 form a helical membrane-spanning segment; the sequence is MAANTSFGIVNLMWWLAWCMW. The Cytoplasmic segment spans residues 241 to 251; it reads RRFHQPYLWKC. Residues 252–272 form a helical membrane-spanning segment; the sequence is VLVVVLLQSLALLELLDFPPV. Met-273 is a topological domain (lumenal). The chain crosses the membrane as a helical span at residues 274–293; sequence WILDAHALWHFSTIPLHFLF. Residues 294–317 are Cytoplasmic-facing; sequence YSFLRDDSLYLLKVNHDDDIPKLD.

It belongs to the PGAP3 family.

Its subcellular location is the golgi apparatus membrane. Involved in the fatty acid remodeling steps of GPI-anchor maturation where the unsaturated acyl chain at sn-2 of inositol phosphate is replaced by a saturated stearoyl chain. May catalyze the first step of the fatty acid remodeling, by removing the unsaturated acyl chain at sn-2 of inositol phosphate, generating a lyso-GPI intermediate. The fatty acid remodeling steps is critical for the integration of GPI-APs into lipid rafts. The protein is GPI-specific phospholipase A2-like PGAP3 of Xenopus laevis (African clawed frog).